A 1544-amino-acid chain; its full sequence is GATOR complex protein Iml1 (1544 aa).

Disordered stretches follow at residues 615–649 and 1037–1072; these read QAVP…CENG and RRHS…EKRP. Polar residues-rich tracts occupy residues 623 to 639 and 1041 to 1057; these read QAGQ…NNNN and TSII…TNSP. The span at 1058–1072 shows a compositional bias: basic and acidic residues; sequence FRERVGSNRLPEKRP.

This sequence belongs to the IML1 family. In terms of assembly, component of the GATOR complex consisting of mio, Nup44A/Seh1, Im11, Nplr3, Nplr2, Wdr24, Wdr59 and Sec13. Within the GATOR complex, probable component of the GATOR1 subcomplex which is likely composed of Iml1, Nplr2 and Nplr3.

Functionally, an essential component of the GATOR subcomplex GATOR1 which functions as an inhibitor of the amino acid-sensing branch of the TORC1 signaling pathway. The two GATOR subcomplexes, GATOR1 and GATOR2, regulate the TORC1 pathway in order to mediate metabolic homeostasis, female gametogenesis and the response to amino acid limitation and complete starvation. The function of GATOR1 in negatively regulating the TORC1 pathway is essential for maintaining baseline levels of TORC1 activity under nutrient rich conditions, and for promoting survival during amino acid or complete starvation by inhibiting TORC1-dependent cell growth and promoting catabolic metabolism and autophagy. GATOR1 and GATOR2 act at different stages of oogenesis to regulate TORC1 in order to control meiotic entry and promote oocyte growth and development. After exactly four mitotic cyst divisions, the GATOR1 complex members (Iml1, Nprl2 and Nprl3) down-regulate TORC1 to slow cellular metabolism and promote the mitotic/meiotic transition. At later stages of oogenesis, the mio and Nup44A components of the GATOR2 complex inhibit GATOR1 and thus activate TORC1 to promote meiotic progression, and drive oocyte growth and development. This Drosophila melanogaster (Fruit fly) protein is GATOR complex protein Iml1.